Reading from the N-terminus, the 568-residue chain is Sulfite reductase [NADPH] hemoprotein beta-component (568 aa).

[4Fe-4S] cluster-binding residues include C425, C431, C470, and C474. C474 is a binding site for siroheme.

Belongs to the nitrite and sulfite reductase 4Fe-4S domain family. In terms of assembly, alpha(8)-beta(8). The alpha component is a flavoprotein, the beta component is a hemoprotein. Siroheme is required as a cofactor. It depends on [4Fe-4S] cluster as a cofactor.

It carries out the reaction hydrogen sulfide + 3 NADP(+) + 3 H2O = sulfite + 3 NADPH + 4 H(+). It participates in sulfur metabolism; hydrogen sulfide biosynthesis; hydrogen sulfide from sulfite (NADPH route): step 1/1. Functionally, component of the sulfite reductase complex that catalyzes the 6-electron reduction of sulfite to sulfide. This is one of several activities required for the biosynthesis of L-cysteine from sulfate. This chain is Sulfite reductase [NADPH] hemoprotein beta-component, found in Xanthomonas campestris pv. campestris (strain B100).